Consider the following 121-residue polypeptide: Large ribosomal subunit protein uL18 (121 aa).

It belongs to the universal ribosomal protein uL18 family. Part of the 50S ribosomal subunit; part of the 5S rRNA/L5/L18/L25 subcomplex. Contacts the 5S and 23S rRNAs.

Its function is as follows. This is one of the proteins that bind and probably mediate the attachment of the 5S RNA into the large ribosomal subunit, where it forms part of the central protuberance. The protein is Large ribosomal subunit protein uL18 of Bordetella avium (strain 197N).